The chain runs to 824 residues: Spindle-defective protein 2 (824 aa).

Composition is skewed to acidic residues over residues 16–27 and 35–44; these read EIEDSPIDDNDN and GDVELEEEEV. Positions 16 to 98 are disordered; the sequence is EIEDSPIDDN…SRPASVMSDK (83 aa). The span at 59 to 70 shows a compositional bias: polar residues; sequence TNMTNPKVNDLT. The segment covering 81-98 has biased composition (low complexity); the sequence is SAASSRSASRPASVMSDK. A coiled-coil region spans residues 111 to 131; the sequence is ENAIEEYTNQVFADENKADLL. Residues 189–252 form a disordered region; the sequence is RAKPGANDNE…GQYQGPNFDL (64 aa). A compositionally biased stretch (polar residues) spans 207 to 225; it reads NVPTTSDKSAFITSPMNST. Positions 304–324 form a coiled coil; the sequence is NNKNQDLFAALEEARKRRAAQ. 2 disordered regions span residues 342 to 372 and 433 to 455; these read KPTSARHSGNVVSSTSNDNTTAASSKDLTTS and NNGNVSLSHGRDGRDSVSSVRTM. Positions 349-366 are enriched in low complexity; sequence SGNVVSSTSNDNTTAASS.

Interacts with sas-7 (via C-terminus); may be recruited to centrioles by sas-7.

The protein resides in the cytoplasm. It localises to the cytoskeleton. The protein localises to the microtubule organizing center. It is found in the centrosome. Its subcellular location is the centriole. Functionally, required both for centrosome duplication and maturation. Required for pericentriolar material (PCM) recruitment. The protein is Spindle-defective protein 2 of Caenorhabditis elegans.